Reading from the N-terminus, the 206-residue chain is Small ribosomal subunit protein uS4 (206 aa).

One can recognise an S4 RNA-binding domain in the interval 96 to 158; that stretch reads SRLDNVVYRM…AKGQLRIKGA (63 aa).

The protein belongs to the universal ribosomal protein uS4 family. Part of the 30S ribosomal subunit. Contacts protein S5. The interaction surface between S4 and S5 is involved in control of translational fidelity.

Its function is as follows. One of the primary rRNA binding proteins, it binds directly to 16S rRNA where it nucleates assembly of the body of the 30S subunit. With S5 and S12 plays an important role in translational accuracy. The chain is Small ribosomal subunit protein uS4 from Coxiella burnetii (strain CbuK_Q154) (Coxiella burnetii (strain Q154)).